The sequence spans 692 residues: Sulfhydryl oxidase 2 (692 aa).

A signal peptide spans 1–38; sequence MAAARAVARDPGAYARQPPSLRAARLPRLLFLLAVVAA. Residues 54–172 form the Thioredoxin domain; sequence SDAVWLLDSG…RQTMIDFLQN (119 aa). The N-linked (GlcNAc...) asparagine glycan is linked to N71. Catalysis depends on nucleophile residues C85 and C88. Intrachain disulfides connect C85-C88 and C116-C125. N-linked (GlcNAc...) asparagine glycans are attached at residues N172, N212, and N260. C412 and C424 are disulfide-bonded. Residues 415-524 form the ERV/ALR sulfhydryl oxidase domain; it reads SRLELRGYPC…EDPKFPKVPW (110 aa). FAD contacts are provided by residues R420, W427, H431, E472, H476, 499 to 506, K521, and W524; that span reads WRKHNMVN. C470 and C473 form a disulfide bridge. C530 and C533 are joined by a disulfide. The disordered stretch occupies residues 568 to 607; the sequence is DQGSPGEWEAQGREQEEGKGLNPSGKSWRHHDTGSLRPPH. The segment covering 577–586 has biased composition (basic and acidic residues); the sequence is AQGREQEEGK. Residues 656–676 form a helical membrane-spanning segment; that stretch reads SLCVVLYVASSLFLMIMYFFF.

Belongs to the quiescin-sulfhydryl oxidase (QSOX) family. FAD serves as cofactor.

Its subcellular location is the membrane. The catalysed reaction is 2 R'C(R)SH + O2 = R'C(R)S-S(R)CR' + H2O2. In terms of biological role, catalyzes the oxidation of sulfhydryl groups in peptide and protein thiols to disulfides with the reduction of oxygen to hydrogen peroxide. May contribute to disulfide bond formation in a variety of secreted proteins. This Mus musculus (Mouse) protein is Sulfhydryl oxidase 2 (Qsox2).